The chain runs to 139 residues: Low molecular weight protein-tyrosine-phosphatase PtpB (139 aa).

C7 functions as the Nucleophile in the catalytic mechanism. R13 is a catalytic residue. The active-site Proton donor is D111.

This sequence belongs to the low molecular weight phosphotyrosine protein phosphatase family.

The catalysed reaction is O-phospho-L-tyrosyl-[protein] + H2O = L-tyrosyl-[protein] + phosphate. Dephosphorylates the phosphotyrosine-containing proteins. The chain is Low molecular weight protein-tyrosine-phosphatase PtpB (ptpB) from Staphylococcus epidermidis (strain ATCC 35984 / DSM 28319 / BCRC 17069 / CCUG 31568 / BM 3577 / RP62A).